The chain runs to 250 residues: Green-light absorbing proteorhodopsin (250 aa).

The signal sequence occupies residues 1–18 (MGKLLLILGSVIALPTFA). The Extracellular portion of the chain corresponds to 19–29 (AGGGDLDASDY). The chain crosses the membrane as a helical span at residues 30–53 (TGVSFWLVTAALLASTVFFFVERD). The Cytoplasmic segment spans residues 54-58 (RVSAK). Residues 59 to 87 (WKTSLTVSGLVTGIAFWHYMYMRGVWIET) traverse the membrane as a helical segment. At 88–90 (GDS) the chain is on the extracellular side. A helical membrane pass occupies residues 91-118 (PTVFRYIDWLLTVPLLICEFYLILAAAT). Over 119–121 (NVA) the chain is Cytoplasmic. The chain crosses the membrane as a helical span at residues 122 to 144 (GSLFKKLLVGSLVMLVFGYMGEA). Residues 145 to 147 (GIM) lie on the Extracellular side of the membrane. Residues 148–177 (AAWPAFIIGCLAWVYMIYELWAGEGKSACN) form a helical membrane-spanning segment. Residues 178–180 (TAS) are Cytoplasmic-facing. Residues 181-208 (PAVQSAYNTMMYIIIFGWAIYPVGYFTG) traverse the membrane as a helical segment. Topologically, residues 209-218 (YLMGDGGSAL) are extracellular. A helical transmembrane segment spans residues 219–249 (NLNLIYNLADFVNKILFGLIIWNVAVKESSN). The residue at position 232 (lysine 232) is an N6-(retinylidene)lysine. Position 250 (alanine 250) is a topological domain, cytoplasmic.

This sequence belongs to the archaeal/bacterial/fungal opsin family. In terms of assembly, homopentamer. GPR protomers assemble into a pentamer around a central pore with a C5 symmetry axis. Post-translationally, contains one covalently linked retinal chromophore per subunit.

The protein localises to the cell membrane. Its function is as follows. Light-driven proton pump. This Unknown prokaryotic organism protein is Green-light absorbing proteorhodopsin.